A 274-amino-acid polypeptide reads, in one-letter code: Undecaprenyl-diphosphatase (274 aa).

8 helical membrane passes run 4 to 24 (LLVI…LLPI), 46 to 66 (VVFE…EYRV), 86 to 106 (INVA…SDFI), 109 to 129 (VLFS…IIMW), 145 to 165 (ISYA…IPGT), 188 to 208 (FSFF…LWEA), 214 to 234 (IEDM…TFAV), and 250 to 270 (FAWY…TGVI).

This sequence belongs to the UppP family.

The protein resides in the cell inner membrane. The enzyme catalyses di-trans,octa-cis-undecaprenyl diphosphate + H2O = di-trans,octa-cis-undecaprenyl phosphate + phosphate + H(+). Its function is as follows. Catalyzes the dephosphorylation of undecaprenyl diphosphate (UPP). Confers resistance to bacitracin. This Cellvibrio japonicus (strain Ueda107) (Pseudomonas fluorescens subsp. cellulosa) protein is Undecaprenyl-diphosphatase.